The primary structure comprises 238 residues: MRIDNRELDQLRTVTFERNYTKHAEGSVLVCFGDTKVLCTASVEAGVPRWLKGKGQGWVTAEYGMLPRATNTRNQREAARGKQSGRTQEIQRLIGRSLRAMVDLTKLGENTIYLDCDVLQADGGTRTASITGAAIALIDALEVLQQKKKLKADPLIGLVAAVSVGVKNGEVLLDLNYEEDSSCDTDLNVVMTQKGEFIEIQGTAEEKPFTRAEADKMLAMAEKGIADLVKLQQTALGW.

Phosphate is bound by residues arginine 86 and glycine 124–arginine 126.

It belongs to the RNase PH family. In terms of assembly, homohexameric ring arranged as a trimer of dimers.

It carries out the reaction tRNA(n+1) + phosphate = tRNA(n) + a ribonucleoside 5'-diphosphate. Its function is as follows. Phosphorolytic 3'-5' exoribonuclease that plays an important role in tRNA 3'-end maturation. Removes nucleotide residues following the 3'-CCA terminus of tRNAs; can also add nucleotides to the ends of RNA molecules by using nucleoside diphosphates as substrates, but this may not be physiologically important. Probably plays a role in initiation of 16S rRNA degradation (leading to ribosome degradation) during starvation. This chain is Ribonuclease PH, found in Psychrobacter sp. (strain PRwf-1).